The primary structure comprises 324 residues: MVRVSVPATSANLGPGFDTLGVALELRNVIEMDETGIDDVVIEVEGAGAGALEDPGRNMVYQAARLVFQRLGYEPNGLLIREKVAIPVARGMGSSAAAIVGGLVAANALVQKRTGGPGLDREELLRMAVAIEGHPDNVTPALLGGFTVSCMDPDRGPLYLCFPPPRGLRAVVVMPEVQIKGRKTEQSRGVLPAQVSLRDAVYNLNRTALLVAAVAQGRTDLLRVAMQDRLHQPYRAALVPGMRSVFEAALSAGALGVALSGAGPSVIALVAESAEPVALAMEAAFQWAGSNARSLTMDLAREGARVLSGPGREQDMLDRPPHWG.

87-97 is a binding site for ATP; it reads PVARGMGSSAA.

It belongs to the GHMP kinase family. Homoserine kinase subfamily.

It localises to the cytoplasm. It carries out the reaction L-homoserine + ATP = O-phospho-L-homoserine + ADP + H(+). Its pathway is amino-acid biosynthesis; L-threonine biosynthesis; L-threonine from L-aspartate: step 4/5. Catalyzes the ATP-dependent phosphorylation of L-homoserine to L-homoserine phosphate. In Symbiobacterium thermophilum (strain DSM 24528 / JCM 14929 / IAM 14863 / T), this protein is Homoserine kinase.